Consider the following 87-residue polypeptide: Large ribosomal subunit protein eL34 (87 aa).

Belongs to the eukaryotic ribosomal protein eL34 family.

The polypeptide is Large ribosomal subunit protein eL34 (Sulfurisphaera tokodaii (strain DSM 16993 / JCM 10545 / NBRC 100140 / 7) (Sulfolobus tokodaii)).